The following is a 2465-amino-acid chain: Serine/threonine-protein kinase TOR (2465 aa).

HEAT repeat units follow at residues 184–221, 271–308, 348–389, 549–587, 588–625, 717–755, 761–799, 888–926, 981–1018, 1022–1059, and 1061–1098; these read VHVP…VIEK, SRYR…FLRD, AELV…AMGP, RLVE…FDDF, LAQA…KNPA, QYLP…STGY, NEYP…LDPH, PYLP…IVRQ, MYIL…VFGG, EHMH…TVQV, and THVS…ALGE. Positions 1158 to 1191 are disordered; it reads DFGGVPSEEADETQRQPRSHQVNDVRLRSAGEAS. Residues 1297–1877 enclose the FAT domain; it reads LLGALAEKCR…MYPLLVACKS (581 aa). Positions 2051–2369 constitute a PI3K/PI4K catalytic domain; sequence FVPQLIVITS…PPRGAREREL (319 aa). Residues 2057–2063 are G-loop; sequence VITSKQR. The segment at 2230–2238 is catalytic loop; it reads GLGDRHPSN. The tract at residues 2250–2275 is activation loop; sequence HIDFGDCFEASMNREKFPEKVPFRLT. Residues 2401–2431 are disordered; the sequence is RDFSSGSSLSGAGSSTQHGNEHLASGDTREV. Low complexity predominate over residues 2404 to 2415; the sequence is SSGSSLSGAGSS. Residues 2433 to 2465 form the FATC domain; the sequence is PGLSVKVQVQRLILQATSHENLCQNYVGWCPFW.

This sequence belongs to the PI3/PI4-kinase family. In terms of assembly, the target of rapamycin complex 1 (TORC1) is composed of at least RAPTOR, LST8 and TOR.

It carries out the reaction L-seryl-[protein] + ATP = O-phospho-L-seryl-[protein] + ADP + H(+). It catalyses the reaction L-threonyl-[protein] + ATP = O-phospho-L-threonyl-[protein] + ADP + H(+). Insensitive to inhibition by rapamycin. In terms of biological role, component of TORC1 complex, which is an essential cell growth regulator that controls plant development. Acts through the phosphorylation of downstream effectors that are recruited by the binding partner RAPTOR. Acts by activating transcription, protein synthesis and ribosome biogenesis, and inhibiting mRNA degradation and autophagy. The protein is Serine/threonine-protein kinase TOR of Oryza sativa subsp. japonica (Rice).